We begin with the raw amino-acid sequence, 252 residues long: Trans-aconitate 2-methyltransferase (252 aa).

It belongs to the methyltransferase superfamily. Tam family.

The protein localises to the cytoplasm. The catalysed reaction is trans-aconitate + S-adenosyl-L-methionine = (E)-3-(methoxycarbonyl)pent-2-enedioate + S-adenosyl-L-homocysteine. Catalyzes the S-adenosylmethionine monomethyl esterification of trans-aconitate. In Escherichia coli (strain ATCC 8739 / DSM 1576 / NBRC 3972 / NCIMB 8545 / WDCM 00012 / Crooks), this protein is Trans-aconitate 2-methyltransferase.